The sequence spans 390 residues: Formate-dependent phosphoribosylglycinamide formyltransferase (390 aa).

Residues 18–19 and Glu-78 contribute to the N(1)-(5-phospho-beta-D-ribosyl)glycinamide site; that span reads EL. ATP is bound by residues Arg-110, Lys-151, 156 to 161, 191 to 194, and Glu-199; these read SSGKGQ and EEFL. The region spanning 115 to 305 is the ATP-grasp domain; that stretch reads DLASKELNIK…EFELHLRAFL (191 aa). Mg(2+) contacts are provided by Glu-264 and Glu-276. Residues Asp-283, Lys-353, and 360–361 each bind N(1)-(5-phospho-beta-D-ribosyl)glycinamide; that span reads RR.

Belongs to the PurK/PurT family. Homodimer.

It carries out the reaction N(1)-(5-phospho-beta-D-ribosyl)glycinamide + formate + ATP = N(2)-formyl-N(1)-(5-phospho-beta-D-ribosyl)glycinamide + ADP + phosphate + H(+). The protein operates within purine metabolism; IMP biosynthesis via de novo pathway; N(2)-formyl-N(1)-(5-phospho-D-ribosyl)glycinamide from N(1)-(5-phospho-D-ribosyl)glycinamide (formate route): step 1/1. In terms of biological role, involved in the de novo purine biosynthesis. Catalyzes the transfer of formate to 5-phospho-ribosyl-glycinamide (GAR), producing 5-phospho-ribosyl-N-formylglycinamide (FGAR). Formate is provided by PurU via hydrolysis of 10-formyl-tetrahydrofolate. This Prochlorococcus marinus subsp. pastoris (strain CCMP1986 / NIES-2087 / MED4) protein is Formate-dependent phosphoribosylglycinamide formyltransferase.